A 200-amino-acid polypeptide reads, in one-letter code: CASP-like protein 1U2 (200 aa).

Over 1 to 33 (MAEPVIVVPRKGVYSDDSYHHHHRHHSFHSCTN) the chain is Cytoplasmic. Residues 34–54 (FLLRTLTAGATAAAVVVMLIS) traverse the membrane as a helical segment. Over 55–77 (TQTSGTIYGYFRGRWRDYPAYKW) the chain is Extracellular. Residues 78–98 (LIIANAVVFVYSVMAAIVACF) traverse the membrane as a helical segment. At 99–120 (SVIARRGPLSYSPSAWLTLLVD) the chain is on the cytoplasmic side. Residues 121-141 (FLAASALISAASAALAVALLA) traverse the membrane as a helical segment. Topologically, residues 142–168 (RNGQDLQGTHYWPTVCNYVSKFCDYTQ) are extracellular. Residues 169–189 (GAIIASFVGFGLLFLSTLLAA) traverse the membrane as a helical segment. At 190-200 (SALYHLSHRRH) the chain is on the cytoplasmic side.

The protein belongs to the Casparian strip membrane proteins (CASP) family. In terms of assembly, homodimer and heterodimers.

It is found in the cell membrane. The protein is CASP-like protein 1U2 of Physcomitrium patens (Spreading-leaved earth moss).